Reading from the N-terminus, the 579-residue chain is CTP synthase 1 (579 aa).

Residues 305 to 559 (KIALVGKYTN…LGLVAASAGI (255 aa)) enclose the Glutamine amidotransferase type-1 domain. Residue Cys404 is the For GATase activity of the active site. Lys422 is covalently cross-linked (Glycyl lysine isopeptide (Lys-Gly) (interchain with G-Cter in ubiquitin)). Residues His535 and Glu537 each act as for GATase activity in the active site.

The protein belongs to the CTP synthase family. In terms of assembly, homodimer. Oligomerizes to a tetramer in the presence of its substrates UTP and ATP.

It carries out the reaction UTP + L-glutamine + ATP + H2O = CTP + L-glutamate + ADP + phosphate + 2 H(+). It participates in pyrimidine metabolism; CTP biosynthesis via de novo pathway; CTP from UDP: step 2/2. With respect to regulation, activated by GTP and inhibited by CTP. Its function is as follows. Catalyzes the ATP-dependent amination of UTP to CTP with either L-glutamine or ammonia as the source of nitrogen. This is CTP synthase 1 (URA7) from Saccharomyces cerevisiae (strain ATCC 204508 / S288c) (Baker's yeast).